The chain runs to 249 residues: Probable transcriptional regulatory protein CYB_1350 (249 aa).

It belongs to the TACO1 family.

Its subcellular location is the cytoplasm. This chain is Probable transcriptional regulatory protein CYB_1350, found in Synechococcus sp. (strain JA-2-3B'a(2-13)) (Cyanobacteria bacterium Yellowstone B-Prime).